Consider the following 371-residue polypeptide: tRNA-specific 2-thiouridylase MnmA (371 aa).

ATP is bound by residues 13–20 (GMSGGVDS) and methionine 39. Residues 99 to 101 (NPD) are interaction with target base in tRNA. The active-site Nucleophile is cysteine 104. An intrachain disulfide couples cysteine 104 to cysteine 200. Glycine 128 is a binding site for ATP. The segment at 150 to 152 (KDQ) is interaction with tRNA. Cysteine 200 functions as the Cysteine persulfide intermediate in the catalytic mechanism. The segment at 309–310 (RY) is interaction with tRNA.

This sequence belongs to the MnmA/TRMU family.

The protein resides in the cytoplasm. The catalysed reaction is S-sulfanyl-L-cysteinyl-[protein] + uridine(34) in tRNA + AH2 + ATP = 2-thiouridine(34) in tRNA + L-cysteinyl-[protein] + A + AMP + diphosphate + H(+). Catalyzes the 2-thiolation of uridine at the wobble position (U34) of tRNA, leading to the formation of s(2)U34. The chain is tRNA-specific 2-thiouridylase MnmA from Bacillus subtilis (strain 168).